A 240-amino-acid polypeptide reads, in one-letter code: 7-cyano-7-deazaguanine synthase (240 aa).

14 to 24 contacts ATP; sequence FSGGQDSATCL. 4 residues coordinate Zn(2+): cysteine 202, cysteine 217, cysteine 220, and cysteine 223.

Belongs to the QueC family. The cofactor is Zn(2+).

It carries out the reaction 7-carboxy-7-deazaguanine + NH4(+) + ATP = 7-cyano-7-deazaguanine + ADP + phosphate + H2O + H(+). Its pathway is purine metabolism; 7-cyano-7-deazaguanine biosynthesis. Its function is as follows. Catalyzes the ATP-dependent conversion of 7-carboxy-7-deazaguanine (CDG) to 7-cyano-7-deazaguanine (preQ(0)). The sequence is that of 7-cyano-7-deazaguanine synthase from Rhodopseudomonas palustris (strain BisB18).